Consider the following 479-residue polypeptide: Ribulose bisphosphate carboxylase large chain (479 aa).

A propeptide spanning residues M1–S2 is cleaved from the precursor. Substrate contacts are provided by N123 and T173. K175 serves as the catalytic Proton acceptor. A substrate-binding site is contributed by K177. Positions 201, 203, and 204 each coordinate Mg(2+). Position 201 is an N6-carboxylysine (K201). The residue at position 208 (S208) is a Phosphoserine. The active-site Proton acceptor is H294. Residues R295 and H327 each contribute to the substrate site. T330 carries the phosphothreonine modification. S379 lines the substrate pocket.

Belongs to the RuBisCO large chain family. Type I subfamily. As to quaternary structure, heterohexadecamer of 8 large chains and 8 small chains; disulfide-linked. The disulfide link is formed within the large subunit homodimers. Mg(2+) is required as a cofactor. In terms of processing, the disulfide bond which can form in the large chain dimeric partners within the hexadecamer appears to be associated with oxidative stress and protein turnover.

It localises to the plastid. The protein localises to the chloroplast. The enzyme catalyses 2 (2R)-3-phosphoglycerate + 2 H(+) = D-ribulose 1,5-bisphosphate + CO2 + H2O. It catalyses the reaction D-ribulose 1,5-bisphosphate + O2 = 2-phosphoglycolate + (2R)-3-phosphoglycerate + 2 H(+). In terms of biological role, ruBisCO catalyzes two reactions: the carboxylation of D-ribulose 1,5-bisphosphate, the primary event in carbon dioxide fixation, as well as the oxidative fragmentation of the pentose substrate in the photorespiration process. Both reactions occur simultaneously and in competition at the same active site. The polypeptide is Ribulose bisphosphate carboxylase large chain (Nasturtium officinale (Watercress)).